We begin with the raw amino-acid sequence, 429 residues long: Enolase (429 aa).

A (2R)-2-phosphoglycerate-binding site is contributed by glutamine 163. The active-site Proton donor is the glutamate 205. Mg(2+) contacts are provided by aspartate 242, glutamate 287, and aspartate 314. 4 residues coordinate (2R)-2-phosphoglycerate: lysine 339, arginine 368, serine 369, and lysine 390. The active-site Proton acceptor is the lysine 339.

It belongs to the enolase family. Requires Mg(2+) as cofactor.

It is found in the cytoplasm. Its subcellular location is the secreted. The protein resides in the cell surface. It catalyses the reaction (2R)-2-phosphoglycerate = phosphoenolpyruvate + H2O. The protein operates within carbohydrate degradation; glycolysis; pyruvate from D-glyceraldehyde 3-phosphate: step 4/5. Its function is as follows. Catalyzes the reversible conversion of 2-phosphoglycerate (2-PG) into phosphoenolpyruvate (PEP). It is essential for the degradation of carbohydrates via glycolysis. This Anaeromyxobacter sp. (strain Fw109-5) protein is Enolase.